The sequence spans 129 residues: Aldose 1-epimerase (129 aa).

This sequence belongs to the aldose epimerase family.

It catalyses the reaction alpha-D-glucose = beta-D-glucose. It functions in the pathway carbohydrate metabolism; hexose metabolism. Its function is as follows. Mutarotase converts alpha-aldose to the beta-anomer. It is active on D-glucose, L-arabinose, D-xylose, D-galactose, maltose and lactose. The chain is Aldose 1-epimerase (galM) from Lactobacillus helveticus (Lactobacillus suntoryeus).